The following is a 221-amino-acid chain: UPF0319 protein NTHI1987 (221 aa).

The signal sequence occupies residues 1–21 (MKLRAVVLGLATLCTSTATFA).

The protein belongs to the UPF0319 family.

This chain is UPF0319 protein NTHI1987, found in Haemophilus influenzae (strain 86-028NP).